We begin with the raw amino-acid sequence, 261 residues long: Thioesterase AMT4 (261 aa).

It belongs to the AMT4 thioesterase family.

It participates in mycotoxin biosynthesis. Thioesterase; part of the gene clusters that mediate the biosynthesis of AM-toxins, host-selective toxins (HSTs) causing Alternaria blotch on apple, a worldwide distributed disease. AM-toxins are cyclic depsipeptides containing the 3 residues 2-hydroxy-isovaleric acid (2-HIV), dehydroalanine, L-alanine which are common for all 3 AM-toxins I to III. The fourth precursor is L-alpha-amino-methoxyphenyl-valeric acid (L-Amv) for AM-toxin I, L-alpha-amino-phenyl-valeric acid (L-Apv) for AM-toxin II, and L-alpha-amino-hydroxyphenyl-valeric acid (L-Ahv) for AM-toxin III. AM-toxins have two target sites for affecting susceptible apple cells; they cause invagination of the plasma membrane and electrolyte loss and chloroplast disorganization. The non-ribosomal peptide synthetase AMT1 contains 4 catalytic modules and is responsible for activation of each residue in AM-toxin. The aldo-keto reductase AMT2 catalyzes the conversion of 2-keto-isovaleric acid (2-KIV) to 2-hydroxy-isovaleric acid (2-HIV), one of the precursor residues incorporated by AMT1 during AM-toxin biosynthesis, by reduction of its ketone to an alcohol. The cytochrome P450 monooxygenase AMT3 and the thioesterase AMT4 are also important for AM-toxin production, but their exact function within the AM-toxin biosynthesis are not known yet. Up to 21 proteins (including AMT1 to AMT4) are predicted to be involved in AM-toxin biosynthesis since their expression ishighly up-regulated in AM-toxin-producing cultures. The sequence is that of Thioesterase AMT4 from Alternaria alternata (Alternaria rot fungus).